We begin with the raw amino-acid sequence, 326 residues long: Biotin synthase (326 aa).

The region spanning 41–271 is the Radical SAM core domain; sequence YHVQLASLLS…EARVRLSAGR (231 aa). [4Fe-4S] cluster-binding residues include Cys56, Cys60, and Cys63. Cys102, Cys134, Cys194, and Arg266 together coordinate [2Fe-2S] cluster.

Belongs to the radical SAM superfamily. Biotin synthase family. As to quaternary structure, homodimer. The cofactor is [4Fe-4S] cluster. [2Fe-2S] cluster is required as a cofactor.

The catalysed reaction is (4R,5S)-dethiobiotin + (sulfur carrier)-SH + 2 reduced [2Fe-2S]-[ferredoxin] + 2 S-adenosyl-L-methionine = (sulfur carrier)-H + biotin + 2 5'-deoxyadenosine + 2 L-methionine + 2 oxidized [2Fe-2S]-[ferredoxin]. It functions in the pathway cofactor biosynthesis; biotin biosynthesis; biotin from 7,8-diaminononanoate: step 2/2. Catalyzes the conversion of dethiobiotin (DTB) to biotin by the insertion of a sulfur atom into dethiobiotin via a radical-based mechanism. This is Biotin synthase from Synechococcus sp. (strain RCC307).